We begin with the raw amino-acid sequence, 723 residues long: Peroxisomal bifunctional enzyme (723 aa).

The segment at 1–282 is enoyl-CoA hydratase / isomerase; the sequence is MAEYTRLHNA…FAERKANKWS (282 aa). The residue at position 38 (lysine 38) is an N6-succinyllysine. Residue glycine 101 coordinates substrate. Lysine 165 bears the N6-acetyllysine; alternate mark. The residue at position 165 (lysine 165) is an N6-succinyllysine; alternate. Lysine 171 carries the post-translational modification N6-acetyllysine. At lysine 219 the chain carries N6-acetyllysine; alternate. N6-succinyllysine; alternate is present on lysine 219. Lysine 250 is subject to N6-acetyllysine. Lysine 280 and lysine 290 each carry N6-succinyllysine. A 3-hydroxyacyl-CoA dehydrogenase region spans residues 283–572; the sequence is TPSGASWKTA…DVLCELGRFG (290 aa). Lysine 346, lysine 350, and lysine 464 each carry N6-acetyllysine. Lysine 532 is modified (N6-succinyllysine). Phosphothreonine is present on threonine 548. At lysine 577 the chain carries N6-succinyllysine. Residues lysine 584, lysine 591, and lysine 710 each carry the N6-acetyllysine; alternate modification. Lysine 584, lysine 591, and lysine 710 each carry N6-succinyllysine; alternate. A Phosphoserine modification is found at serine 718. Positions 721 to 723 match the Microbody targeting signal motif; sequence SKL. Lysine 722 carries the N6-succinyllysine modification.

The protein in the N-terminal section; belongs to the enoyl-CoA hydratase/isomerase family. In the C-terminal section; belongs to the 3-hydroxyacyl-CoA dehydrogenase family. Monomer. In terms of processing, acetylated, leading to enhanced enzyme activity. Acetylation is enhanced by up to 80% after treatment either with trichostin A (TSA) or with nicotinamide (NAM) with highest increase on Lys-346. Acetylation and enzyme activity increased by about 1.5% on addition of fatty acids. In terms of tissue distribution, liver and kidney. Strongly expressed in the terminal segments of the proximal tubule. Lower amounts seen in the brain.

It is found in the peroxisome. It catalyses the reaction a (3S)-3-hydroxyacyl-CoA = a (2E)-enoyl-CoA + H2O. The enzyme catalyses a 4-saturated-(3S)-3-hydroxyacyl-CoA = a (3E)-enoyl-CoA + H2O. The catalysed reaction is a (3Z)-enoyl-CoA = a 4-saturated (2E)-enoyl-CoA. It carries out the reaction a (3E)-enoyl-CoA = a 4-saturated (2E)-enoyl-CoA. It catalyses the reaction a (3S)-3-hydroxyacyl-CoA + NAD(+) = a 3-oxoacyl-CoA + NADH + H(+). The enzyme catalyses (2S,3S)-3-hydroxy-2-methylbutanoyl-CoA = (2E)-2-methylbut-2-enoyl-CoA + H2O. The catalysed reaction is (3S)-hydroxyhexadecanoyl-CoA + NAD(+) = 3-oxohexadecanoyl-CoA + NADH + H(+). It carries out the reaction (3S)-hydroxyhexadecanoyl-CoA = (2E)-hexadecenoyl-CoA + H2O. It catalyses the reaction (2E)-hexadecenedioyl-CoA + H2O = (3S)-hydroxyhexadecanedioyl-CoA. The enzyme catalyses (3S)-hydroxyhexadecanedioyl-CoA + NAD(+) = 3-oxohexadecanedioyl-CoA + NADH + H(+). The catalysed reaction is (3E,5Z)-tetradecadienoyl-CoA = (2E,5Z)-tetradecadienoyl-CoA. It carries out the reaction (3E,5Z)-octadienoyl-CoA = (2E,5Z)-octadienoyl-CoA. It catalyses the reaction (3S)-hydroxydecanoyl-CoA + NAD(+) = 3-oxodecanoyl-CoA + NADH + H(+). The enzyme catalyses (3E)-decenoyl-CoA = (2E)-decenoyl-CoA. The catalysed reaction is (3Z)-hexenoyl-CoA = (2E)-hexenoyl-CoA. It carries out the reaction (3E)-hexenoyl-CoA = (2E)-hexenoyl-CoA. It catalyses the reaction (3S)-hydroxydecanoyl-CoA = (2E)-decenoyl-CoA + H2O. The enzyme catalyses (3S)-hydroxyhexanoyl-CoA = (2E)-hexenoyl-CoA + H2O. It participates in lipid metabolism; fatty acid beta-oxidation. With respect to regulation, enzyme activity enhanced by acetylation. Its function is as follows. Peroxisomal trifunctional enzyme possessing 2-enoyl-CoA hydratase, 3-hydroxyacyl-CoA dehydrogenase, and delta 3, delta 2-enoyl-CoA isomerase activities. Catalyzes two of the four reactions of the long chain fatty acids peroxisomal beta-oxidation pathway. Can also use branched-chain fatty acids such as 2-methyl-2E-butenoyl-CoA as a substrate, which is hydrated into (2S,3S)-3-hydroxy-2-methylbutanoyl-CoA. Optimal isomerase for 2,5 double bonds into 3,5 form isomerization in a range of enoyl-CoA species. Also able to isomerize both 3-cis and 3-trans double bonds into the 2-trans form in a range of enoyl-CoA species. With HSD17B4, catalyzes the hydration of trans-2-enoyl-CoA and the dehydrogenation of 3-hydroxyacyl-CoA, but with opposite chiral specificity. Regulates the amount of medium-chain dicarboxylic fatty acids which are essential regulators of all fatty acid oxidation pathways. Also involved in the degradation of long-chain dicarboxylic acids through peroxisomal beta-oxidation. The sequence is that of Peroxisomal bifunctional enzyme from Homo sapiens (Human).